Reading from the N-terminus, the 400-residue chain is NADPH dehydrogenase 1 (400 aa).

Residues Thr-38 and Gln-115 each coordinate FMN. Substrate is bound by residues His-192 and Asn-195. Tyr-197 (proton donor) is an active-site residue. Residues Arg-244 and Arg-349 each contribute to the FMN site. Tyr-376 lines the substrate pocket.

Homodimer or heterodimer. The cofactor is FMN.

It catalyses the reaction A + NADPH + H(+) = AH2 + NADP(+). Its function is as follows. Flavin-dependent enoate reductase that catalyzes the chemo- and stereoslective hydrogenation of electron-poor alkenes. The enzyme is reduced by NADPH, and oxygen, quinones, and alpha,beta-unsaturated aldehydes and ketones can act as electron acceptors to complete catalytic turnover. The physiological oxidant remains elusive. This Saccharomyces pastorianus (Lager yeast) protein is NADPH dehydrogenase 1.